Reading from the N-terminus, the 1184-residue chain is Fibulin-2 (1184 aa).

The N-terminal stretch at Met1–Ala27 is a signal peptide. Residues Ala28–Cys177 are subdomain NA (Cys-rich). Positions Ala28–Thr444 are n. A subdomain NB (Cys-free) region spans residues His178–Thr444. A glycan (N-linked (GlcNAc...) asparagine) is linked at Asn180. 2 disordered regions span residues Val221–Thr293 and Ile399–Ser437. A compositionally biased stretch (gly residues) spans Gly224–Ser236. Over residues Pro252 to Gly261 the composition is skewed to low complexity. A compositionally biased stretch (acidic residues) spans Asp276–Glu288. Phosphoserine is present on Ser277. Polar residues predominate over residues Pro423 to Gly436. Cystine bridges form between Cys445–Cys472, Cys446–Cys479, Cys459–Cys480, Cys489–Cys518, Cys502–Cys519, Cys521–Cys545, Cys522–Cys552, Cys535–Cys553, Cys608–Cys620, Cys616–Cys629, Cys631–Cys644, Cys683–Cys693, Cys689–Cys702, Cys704–Cys717, Cys723–Cys736, Cys730–Cys745, Cys751–Cys762, Cys768–Cys781, Cys775–Cys790, Cys796–Cys808, Cys814–Cys827, Cys821–Cys836, Cys843–Cys856, Cys862–Cys875, Cys869–Cys884, Cys886–Cys899, Cys905–Cys917, Cys913–Cys926, Cys928–Cys941, Cys947–Cys956, Cys952–Cys965, Cys967–Cys980, Cys986–Cys998, Cys994–Cys1007, Cys1009–Cys1023, Cys1029–Cys1042, Cys1036–Cys1051, and Cys1056–Cys1068. Anaphylatoxin-like domains lie at Cys445–Cys480, Ser488–Cys519, and Cys521–Cys553. Residue Asn507 is glycosylated (N-linked (GlcNAc...) asparagine). Residues Asp604–Arg645 enclose the EGF-like 1; calcium-binding domain. One can recognise an EGF-like 2 domain in the interval Gln679–Glu718. The EGF-like 3; calcium-binding domain occupies Asp719–Glu763. The region spanning Asp764 to Val809 is the EGF-like 4; calcium-binding domain. The EGF-like 5; calcium-binding domain occupies Asp810–Val857. Residues Asp858–Ile900 form the EGF-like 6; calcium-binding domain. In terms of domain architecture, EGF-like 7; calcium-binding spans Asp901–Glu942. Positions Asp943–Thr981 constitute an EGF-like 8; calcium-binding domain. Residues Asp982–Lys1024 enclose the EGF-like 9; calcium-binding domain. The EGF-like 10; calcium-binding domain maps to Asp1025–Glu1069. Residue Asn1035 is glycosylated (N-linked (GlcNAc...) asparagine). A domain III region spans residues Arg1070–Leu1184.

It belongs to the fibulin family. As to quaternary structure, homotrimer; disulfide-linked. Interacts with LAMA2. Interacts with FBN1 (via N-terminal domain). Forms a ternary complex with ELN and FBN1. In terms of processing, O-glycosylated with core 1 or possibly core 8 glycans. It is unsure if the O-glycosylation is on Thr-347 or Ser-348. As to expression, component of both basement membranes and other connective tissues. Expressed in heart, placenta and ovary.

Its subcellular location is the secreted. The protein resides in the extracellular space. It localises to the extracellular matrix. In terms of biological role, its binding to fibronectin and some other ligands is calcium dependent. May act as an adapter that mediates the interaction between FBN1 and ELN. This Homo sapiens (Human) protein is Fibulin-2 (FBLN2).